We begin with the raw amino-acid sequence, 106 residues long: Protein U4 (106 aa).

A helical membrane pass occupies residues 5–25; the sequence is FFISIILFVVLLNPSLIINMV.

Belongs to the nanovirus U4 protein family.

Its subcellular location is the membrane. The polypeptide is Protein U4 (DNA-U4) (Cicer arietinum (Chickpea)).